The primary structure comprises 284 residues: Protein-S-isoprenylcysteine O-methyltransferase (284 aa).

The Cytoplasmic portion of the chain corresponds to Met-1–Leu-16. Residues Ser-17 to Leu-33 traverse the membrane as a helical segment. Topologically, residues Thr-34–Arg-41 are lumenal. The helical transmembrane segment at Thr-42–Tyr-59 threads the bilayer. Over Arg-60–Arg-69 the chain is Cytoplasmic. Residues Ala-70 to Gln-87 form a helical membrane-spanning segment. The Lumenal segment spans residues Ser-88 to His-92. The chain crosses the membrane as a helical span at residues Phe-93–Ala-112. At Val-113 to Glu-131 the chain is on the cytoplasmic side. A helical membrane pass occupies residues Tyr-132–Phe-149. At Trp-150–Lys-154 the chain is on the lumenal side. Residues Gln-155–Arg-174 traverse the membrane as a helical segment. Residues Lys-175 to Ser-212 lie on the Cytoplasmic side of the membrane. S-adenosyl-L-methionine is bound by residues Gln-190, His-197–Val-200, Tyr-205, and His-210–Tyr-213. A helical transmembrane segment spans residues Tyr-213–Cys-228. Asn-229 is a topological domain (lumenal). Residues Pro-230–Phe-244 form a helical membrane-spanning segment. The Cytoplasmic portion of the chain corresponds to Arg-245 to Leu-284. Residue Arg-247 participates in substrate binding. Glu-251 is a binding site for S-adenosyl-L-methionine.

Belongs to the class VI-like SAM-binding methyltransferase superfamily. Isoprenylcysteine carboxyl methyltransferase family.

It localises to the endoplasmic reticulum membrane. It catalyses the reaction [protein]-C-terminal S-[(2E,6E)-farnesyl]-L-cysteine + S-adenosyl-L-methionine = [protein]-C-terminal S-[(2E,6E)-farnesyl]-L-cysteine methyl ester + S-adenosyl-L-homocysteine. Its function is as follows. Catalyzes the post-translational methylation of isoprenylated C-terminal cysteine residues. This chain is Protein-S-isoprenylcysteine O-methyltransferase, found in Rattus norvegicus (Rat).